The chain runs to 80 residues: Large ribosomal subunit protein bL28 (80 aa).

Residues 1 to 21 (MSRICQITRKKSMKGNSVAHS) are disordered.

It belongs to the bacterial ribosomal protein bL28 family.

The chain is Large ribosomal subunit protein bL28 from Azobacteroides pseudotrichonymphae genomovar. CFP2.